Here is a 298-residue protein sequence, read N- to C-terminus: Glycine--tRNA ligase alpha subunit (298 aa).

This sequence belongs to the class-II aminoacyl-tRNA synthetase family. As to quaternary structure, tetramer of two alpha and two beta subunits.

It is found in the cytoplasm. The catalysed reaction is tRNA(Gly) + glycine + ATP = glycyl-tRNA(Gly) + AMP + diphosphate. This Lacticaseibacillus paracasei (strain ATCC 334 / BCRC 17002 / CCUG 31169 / CIP 107868 / KCTC 3260 / NRRL B-441) (Lactobacillus paracasei) protein is Glycine--tRNA ligase alpha subunit.